The sequence spans 770 residues: Integrin beta-2 (770 aa).

The first 22 residues, 1-22, serve as a signal peptide directing secretion; that stretch reads MLPQRPQLLLLAGLLSLQSVLS. Glutamine 23 bears the Pyrrolidone carboxylic acid mark. The Extracellular portion of the chain corresponds to 23–701; that stretch reads QECTKYKVST…DMLECVKGPN (679 aa). Residues 24–74 form the PSI domain; the sequence is ECTKYKVSTCRDCIESGPSCAWCQKLNFTGQGEPDSTRCDTRAQLLSKGCP. 28 disulfides stabilise this stretch: cysteine 25–cysteine 43, cysteine 33–cysteine 447, cysteine 36–cysteine 62, cysteine 46–cysteine 73, cysteine 191–cysteine 198, cysteine 246–cysteine 286, cysteine 386–cysteine 400, cysteine 420–cysteine 445, cysteine 449–cysteine 467, cysteine 459–cysteine 470, cysteine 472–cysteine 481, cysteine 483–cysteine 514, cysteine 497–cysteine 512, cysteine 506–cysteine 517, cysteine 519–cysteine 534, cysteine 536–cysteine 559, cysteine 541–cysteine 557, cysteine 549–cysteine 562, cysteine 564–cysteine 573, cysteine 575–cysteine 598, cysteine 582–cysteine 596, cysteine 590–cysteine 601, cysteine 603–cysteine 612, cysteine 615–cysteine 618, cysteine 622–cysteine 663, cysteine 628–cysteine 647, cysteine 631–cysteine 643, and cysteine 671–cysteine 696. Asparagine 50 and asparagine 116 each carry an N-linked (GlcNAc...) asparagine glycan. A VWFA domain is found at 124 to 363; that stretch reads GYPIDLYYLM…ELIKSAYNKL (240 aa). Serine 136 and serine 138 together coordinate Mg(2+). Residues serine 138, aspartate 141, aspartate 142, and aspartate 173 each coordinate Ca(2+). Ca(2+)-binding residues include asparagine 229, aspartate 231, proline 233, and glutamate 234. Glutamate 234 lines the Mg(2+) pocket. Asparagine 254 carries an N-linked (GlcNAc...) asparagine glycan. Positions 264 and 347 each coordinate Ca(2+). Positions 397–399 match the Cell attachment site motif; it reads RGD. I-EGF domains lie at 449-482, 483-535, 536-574, and 575-613; these read CREA…KNCE, CQTH…QFCE, CDNV…SACQ, and CLKS…PLCI. N-linked (GlcNAc...) asparagine glycosylation is present at asparagine 501. N-linked (GlcNAc...) asparagine glycosylation occurs at asparagine 642. A helical transmembrane segment spans residues 702–724; sequence IAAIVGGTVGGVVLVGILLLAIW. The Cytoplasmic portion of the chain corresponds to 725–770; that stretch reads KALTHLSDLREYHRFEKEKLKSQWNNDNPLFKSATTTVMNPKFAES. Phosphoserine is present on residues serine 746 and serine 757. 2 positions are modified to phosphothreonine: threonine 759 and threonine 761.

It belongs to the integrin beta chain family. Heterodimer of an alpha and a beta subunit. The ITGB2 beta subunit associates with the ITGAL, ITGAM, ITGAX or ITGAD alpha subunits. Found in a complex with CD177 and ITGAM/CD11b. Interacts with FGR. Interacts with COPS5 and RANBP9. Interacts with FLNA (via filamin repeats 4, 9, 12, 17, 19, 21, and 23). Interacts with THBD. Post-translationally, both Ser-746 and Ser-757 become phosphorylated when T-cells are exposed to phorbol esters. Phosphorylation on Thr-759 (but not on Ser-757) allows interaction with 14-3-3 proteins.

It is found in the cell membrane. The protein localises to the membrane raft. Integrin ITGAL/ITGB2 is a receptor for ICAM1, ICAM2, ICAM3 and ICAM4. Integrin ITGAL/ITGB2 is also a receptor for the secreted form of ubiquitin-like protein ISG15; the interaction is mediated by ITGAL. Integrins ITGAM/ITGB2 and ITGAX/ITGB2 are receptors for the iC3b fragment of the third complement component and for fibrinogen. Integrin ITGAX/ITGB2 recognizes the sequence G-P-R in fibrinogen alpha-chain. Integrin ITGAM/ITGB2 recognizes P1 and P2 peptides of fibrinogen gamma chain. Integrin ITGAM/ITGB2 is also a receptor for factor X. Integrin ITGAD/ITGB2 is a receptor for ICAM3 and VCAM1. Contributes to natural killer cell cytotoxicity. Involved in leukocyte adhesion and transmigration of leukocytes including T-cells and neutrophils. Triggers neutrophil transmigration during lung injury through PTK2B/PYK2-mediated activation. Integrin ITGAL/ITGB2 in association with ICAM3, contributes to apoptotic neutrophil phagocytosis by macrophages. In association with alpha subunit ITGAM/CD11b, required for CD177-PRTN3-mediated activation of TNF primed neutrophils. The chain is Integrin beta-2 (ITGB2) from Ovis canadensis (Bighorn sheep).